A 169-amino-acid chain; its full sequence is Anaerobic nitrite reductase NSHB3 (169 aa).

The 151-residue stretch at 15–165 folds into the Globin domain; the sequence is RFTEEQEALV…LVAAIKQGMK (151 aa). Residues 48–52 carry the Homodimerization motif; sequence EVAPS. Heme b contacts are provided by S58, K72, H76, R106, T110, and H111. The Homodimerization motif lies at 118–130; it reads DAHFEVAKFALLE.

It belongs to the plant globin family. As to quaternary structure, homodimer. It depends on heme b as a cofactor.

The protein resides in the cytoplasm. It localises to the nucleus. The enzyme catalyses Fe(III)-heme b-[protein] + nitric oxide + H2O = Fe(II)-heme b-[protein] + nitrite + 2 H(+). In terms of biological role, phytoglobin that reduces nitrite to nitric oxide under anoxic conditions (e.g. during flooding or in waterlogged soil). May not function as an oxygen storage or transport protein. Has an unusually high affinity for O(2) through an hexacoordinate heme iron because of a very low dissociation constant. The protein is Anaerobic nitrite reductase NSHB3 of Oryza sativa subsp. indica (Rice).